Consider the following 396-residue polypeptide: General transcription factor IIH subunit 2 (396 aa).

The VWFA domain occupies 60-236 (HLYVVVDGSR…HYKELLARHV (177 aa)). Tyrosine 95 is subject to Phosphotyrosine. A C4-type zinc finger spans residues 292 to 309 (CPQCRAKYCELPVECKIC).

It belongs to the GTF2H2 family. Component of the TFIID-containing RNA polymerase II pre-initiation complex that is composed of TBP and at least GTF2A1, GTF2A2, GTF2E1, GTF2E2, GTF2F1, GTF2H2, GTF2H3, GTF2H4, GTF2H5, GTF2B, TCEA1, ERCC2 and ERCC3. Component of the 7-subunit TFIIH core complex composed of XPB/ERCC3, XPD/ERCC2, GTF2H1, GTF2H2, GTF2H3, GTF2H4 and GTF2H5, which is active in NER. The core complex associates with the 3-subunit CDK-activating kinase (CAK) module composed of CCNH/cyclin H, CDK7 and MNAT1 to form the 10-subunit holoenzyme (holo-TFIIH) active in transcription. Interacts with XPB, XPD, GTF2H1 and GTF2H3.

The protein resides in the nucleus. Component of the general transcription and DNA repair factor IIH (TFIIH) core complex, which is involved in general and transcription-coupled nucleotide excision repair (NER) of damaged DNA and, when complexed to CAK, in RNA transcription by RNA polymerase II. In NER, TFIIH acts by opening DNA around the lesion to allow the excision of the damaged oligonucleotide and its replacement by a new DNA fragment. In transcription, TFIIH has an essential role in transcription initiation. When the pre-initiation complex (PIC) has been established, TFIIH is required for promoter opening and promoter escape. Phosphorylation of the C-terminal tail (CTD) of the largest subunit of RNA polymerase II by the kinase module CAK controls the initiation of transcription. The N-terminus of GTF2H2 interacts with and regulates XPD whereas an intact C-terminus is required for a successful escape of RNAP II form the promoter. This chain is General transcription factor IIH subunit 2 (Gtf2h2), found in Rattus norvegicus (Rat).